We begin with the raw amino-acid sequence, 508 residues long: Histone acetyltransferase type B catalytic subunit (508 aa).

2 interaction with histone H4 N-terminus regions span residues 44-46 (EKE) and 207-209 (YRY). Residues 249 to 251 (FII) and 256 to 262 (QQKGLGS) each bind acetyl-CoA. Glu284 serves as the catalytic Proton donor/acceptor. 2 disordered regions span residues 364 to 399 (SVRPGLGAPEDEDYEEQSGRSKSKGHEKALPKPTPE) and 461 to 508 (QADG…SGHA). The segment covering 387 to 399 (KGHEKALPKPTPE) has biased composition (basic and acidic residues).

It belongs to the HAT1 family. In terms of assembly, component of the HAT-B complex composed of at least hat-1 and hat-2. The HAT-B complex binds to histone H4 tail.

It is found in the cytoplasm. It localises to the nucleus. The catalysed reaction is L-lysyl-[protein] + acetyl-CoA = N(6)-acetyl-L-lysyl-[protein] + CoA + H(+). Functionally, catalytic component of the histone acetylase B (HAT-B) complex. Acetylates 'Lys-12' of histone H4 which is required for telomeric silencing. Has intrinsic substrate specificity that modifies lysine in recognition sequence GXGKXG. Involved in DNA double-strand break repair. This is Histone acetyltransferase type B catalytic subunit (hat-1) from Neurospora crassa (strain ATCC 24698 / 74-OR23-1A / CBS 708.71 / DSM 1257 / FGSC 987).